The following is a 678-amino-acid chain: DNA ligase (678 aa).

NAD(+)-binding positions include 47–51, 96–97, and glutamate 122; these read DSDYD and SL. The N6-AMP-lysine intermediate role is filled by lysine 124. Residues arginine 145, glutamate 182, lysine 300, and lysine 324 each contribute to the NAD(+) site. Zn(2+) contacts are provided by cysteine 418, cysteine 421, cysteine 436, and cysteine 442. The 77-residue stretch at 602–678 folds into the BRCT domain; the sequence is AYNESFTGKT…ILEDNLKDLL (77 aa).

This sequence belongs to the NAD-dependent DNA ligase family. LigA subfamily. Requires Mg(2+) as cofactor. The cofactor is Mn(2+).

It catalyses the reaction NAD(+) + (deoxyribonucleotide)n-3'-hydroxyl + 5'-phospho-(deoxyribonucleotide)m = (deoxyribonucleotide)n+m + AMP + beta-nicotinamide D-nucleotide.. Functionally, DNA ligase that catalyzes the formation of phosphodiester linkages between 5'-phosphoryl and 3'-hydroxyl groups in double-stranded DNA using NAD as a coenzyme and as the energy source for the reaction. It is essential for DNA replication and repair of damaged DNA. The chain is DNA ligase from Francisella tularensis subsp. holarctica (strain LVS).